The sequence spans 553 residues: Copine-9 (553 aa).

C2 domains follow at residues 1–125 (MSLG…ERTL) and 132–255 (KCGT…FTVY). Residue asparagine 95 is glycosylated (N-linked (GlcNAc...) asparagine). Ca(2+)-binding residues include aspartate 163, aspartate 169, aspartate 225, aspartate 227, and aspartate 233. The region spanning 299–500 (NFTVAIDFTA…VQFVPFRDYV (202 aa)) is the VWFA domain. Positions 531–553 (TRDIQPRPPPPANPSPIPAPEQP) are disordered. Residues 536–553 (PRPPPPANPSPIPAPEQP) are compositionally biased toward pro residues.

It belongs to the copine family. The cofactor is Ca(2+). In terms of tissue distribution, expressed in melanocytes.

Probable calcium-dependent phospholipid-binding protein that may play a role in calcium-mediated intracellular processes. Plays a role in dendrite formation by melanocytes. This chain is Copine-9, found in Homo sapiens (Human).